The sequence spans 25 residues: Dermaseptin-5.2TR (25 aa).

Residue valine 25 is modified to Valine amide.

Expressed by the skin glands.

The protein resides in the secreted. Has antimicrobial activity. This chain is Dermaseptin-5.2TR, found in Phyllomedusa trinitatis (Trinidad leaf frog).